The primary structure comprises 395 residues: Xylose isomerase (395 aa).

Active-site residues include H54 and E57. Residues 80-108 (AVPAGAGRDRHEGADGDDEPVHAPGCSRD) are disordered. Mg(2+) contacts are provided by E189, E225, H228, D253, D263, D265, and D295.

Belongs to the xylose isomerase family. In terms of assembly, homotetramer. The cofactor is Mg(2+).

It is found in the cytoplasm. The catalysed reaction is alpha-D-xylose = alpha-D-xylulofuranose. The polypeptide is Xylose isomerase (Streptomyces lividans).